Reading from the N-terminus, the 363-residue chain is Protein-glutamate methylesterase/protein-glutamine glutaminase 2 (363 aa).

The Response regulatory domain maps to 7-124 (RVLVVDDSAL…SLTLENVADE (118 aa)). At Asp-58 the chain carries 4-aspartylphosphate. The 198-residue stretch at 160-357 (PVASRTTPSK…NLLMVQSAAQ (198 aa)) folds into the CheB-type methylesterase domain. Catalysis depends on residues Ser-176, His-203, and Asp-299.

This sequence belongs to the CheB family. Post-translationally, phosphorylated by CheA. Phosphorylation of the N-terminal regulatory domain activates the methylesterase activity.

The protein localises to the cytoplasm. The enzyme catalyses [protein]-L-glutamate 5-O-methyl ester + H2O = L-glutamyl-[protein] + methanol + H(+). It carries out the reaction L-glutaminyl-[protein] + H2O = L-glutamyl-[protein] + NH4(+). Its function is as follows. Involved in chemotaxis. Part of a chemotaxis signal transduction system that modulates chemotaxis in response to various stimuli. Catalyzes the demethylation of specific methylglutamate residues introduced into the chemoreceptors (methyl-accepting chemotaxis proteins or MCP) by CheR. Also mediates the irreversible deamidation of specific glutamine residues to glutamic acid. This is Protein-glutamate methylesterase/protein-glutamine glutaminase 2 from Koribacter versatilis (strain Ellin345).